We begin with the raw amino-acid sequence, 197 residues long: Imidazoleglycerol-phosphate dehydratase (197 aa).

It belongs to the imidazoleglycerol-phosphate dehydratase family.

It localises to the cytoplasm. It catalyses the reaction D-erythro-1-(imidazol-4-yl)glycerol 3-phosphate = 3-(imidazol-4-yl)-2-oxopropyl phosphate + H2O. Its pathway is amino-acid biosynthesis; L-histidine biosynthesis; L-histidine from 5-phospho-alpha-D-ribose 1-diphosphate: step 6/9. The polypeptide is Imidazoleglycerol-phosphate dehydratase (Nitrobacter hamburgensis (strain DSM 10229 / NCIMB 13809 / X14)).